Here is a 545-residue protein sequence, read N- to C-terminus: DNA-binding protein REPIN1 (545 aa).

The segment at 1–50 is disordered; it reads MLEQRCRGPTAMGPAQPWLFSGPSQESSQPDRGLRYQGKSAQPRGQTPGK. Ser27 is subject to Phosphoserine. N6-acetyllysine is present on Lys39. A C2H2-type 1; atypical zinc finger spans residues 52 to 74; that stretch reads HRCAHCRKRFPGWVALWLHARRC. 2 consecutive C2H2-type zinc fingers follow at residues 80–102 and 111–133; these read LPCH…LQVH and FICH…LRAH. A C2H2-type 4; atypical zinc finger spans residues 140–162; it reads ITCPECDRRFWRQKQLRAHLRRC. C2H2-type zinc fingers lie at residues 172–194, 229–251, 257–279, 285–307, 353–375, 381–403, 409–431, 437–459, 465–487, 493–515, and 521–543; these read FICG…KRVH, FQCA…RRVH, HQCP…RRIH, YPCT…SKIH, HSCS…QRQH, FACT…SRVH, FACE…RRDH, FVCP…RRIH, YVCP…RRIH, YACP…RKSH, and FCCA…QKKH. An N6-acetyllysine modification is found at Lys269.

Homodimers and homomultimers. Found in a complex with RIP60 and RIP100.

Its subcellular location is the nucleus. The protein resides in the cytoplasm. It is found in the cytosol. Functionally, sequence-specific double-stranded DNA-binding protein. Binds ATT-rich and T-rich DNA sequences and facilitates DNA bending. May regulate the expression of genes involved in cellular fatty acid import, including SCARB1/CD36, and genes involved in lipid droplet formation. May regulate the expression of LCN2, and thereby influence iron metabolism and apoptosis-related pathways. May regulate the expression of genes involved in glucose transport. This is DNA-binding protein REPIN1 (Repin1) from Mus musculus (Mouse).